A 368-amino-acid polypeptide reads, in one-letter code: Propane 2-monooxygenase, hydroxylase component small subunit (368 aa).

The protein belongs to the TmoE/XamoE family. In terms of assembly, the propane 2-monooxygenase multicomponent enzyme system is composed of an electron transfer component and a monooxygenase component interacting with the effector protein MimD. The electron transfer component is composed of a reductase (MimB), and the monooxygenase component is formed by a large subunit (MimA) and a small subunit (MimC). Requires the presence of the chaperonin-like protein MimG to ensure a productive folding, resulting of a soluble MimC, which leads to the active form of MimABCD.

It catalyses the reaction propane + NADH + O2 + H(+) = propan-2-ol + NAD(+) + H2O. It carries out the reaction acetone + NADH + O2 + H(+) = hydroxyacetone + NAD(+) + H2O. The catalysed reaction is butan-2-one + NADH + O2 + H(+) = 1-hydroxy-2-butanone + NAD(+) + H2O. The enzyme catalyses phenol + NADH + O2 + H(+) = hydroquinone + NAD(+) + H2O. Component of the propane 2-monooxygenase multicomponent enzyme system which is involved in the degradation of propane via the O2-dependent hydroxylation of propane. Also involved in the degradation of acetone via the O2-dependent hydroxylation of acetone. Also able to catalyze the oxidation of phenol, methylethylketone (2-butanone), 1-propanol and 2-propanol. The protein is Propane 2-monooxygenase, hydroxylase component small subunit of Mycolicibacterium goodii (Mycobacterium goodii).